Here is a 558-residue protein sequence, read N- to C-terminus: Formate--tetrahydrofolate ligase (558 aa).

67–74 provides a ligand contact to ATP; sequence TPAGEGKT.

The protein belongs to the formate--tetrahydrofolate ligase family.

The catalysed reaction is (6S)-5,6,7,8-tetrahydrofolate + formate + ATP = (6R)-10-formyltetrahydrofolate + ADP + phosphate. It participates in one-carbon metabolism; tetrahydrofolate interconversion. In Ruegeria sp. (strain TM1040) (Silicibacter sp.), this protein is Formate--tetrahydrofolate ligase.